The sequence spans 393 residues: Probable acetyl-CoA acyltransferase (393 aa).

The active-site Acyl-thioester intermediate is Cys-88. Residues His-349 and Cys-378 each act as proton acceptor in the active site.

This sequence belongs to the thiolase-like superfamily. Thiolase family.

It localises to the cytoplasm. The catalysed reaction is 2 acetyl-CoA = acetoacetyl-CoA + CoA. The protein is Probable acetyl-CoA acyltransferase of Staphylococcus aureus (strain NCTC 8325 / PS 47).